The sequence spans 391 residues: uncharacterized protein (391 aa).

This is an uncharacterized protein from Rickettsia prowazekii (strain Madrid E).